The sequence spans 245 residues: tRNA pseudouridine synthase A (245 aa).

Residue Asp52 is the Nucleophile of the active site. Tyr111 contributes to the substrate binding site.

The protein belongs to the tRNA pseudouridine synthase TruA family. As to quaternary structure, homodimer.

It carries out the reaction uridine(38/39/40) in tRNA = pseudouridine(38/39/40) in tRNA. In terms of biological role, formation of pseudouridine at positions 38, 39 and 40 in the anticodon stem and loop of transfer RNAs. The protein is tRNA pseudouridine synthase A of Rickettsia prowazekii (strain Madrid E).